The sequence spans 249 residues: Adenylate kinase (249 aa).

43-48 (GAGKGT) is an ATP binding site. The tract at residues 63–92 (ATGDMLRAQVAAKSALGVEAKKIMDQGGLV) is NMP. AMP-binding positions include threonine 64, arginine 69, 90–92 (GLV), 119–122 (GFPR), and glutamine 126. The segment at 160-197 (GRLVHPASGRSYHKLFNPPKKDMIDDVSGDALVQRSDD) is LID. ATP is bound by residues arginine 161 and 170–171 (SY). Positions 194 and 205 each coordinate AMP. Glutamine 233 lines the ATP pocket.

It belongs to the adenylate kinase family. AK2 subfamily. In terms of assembly, monomer.

Its subcellular location is the cytoplasm. The protein resides in the cytosol. It is found in the mitochondrion intermembrane space. The enzyme catalyses AMP + ATP = 2 ADP. Its function is as follows. Catalyzes the reversible transfer of the terminal phosphate group between ATP and AMP. Plays an important role in cellular energy homeostasis and in adenine nucleotide metabolism. Adenylate kinase activity is critical for regulation of the phosphate utilization and the AMP de novo biosynthesis pathways. The chain is Adenylate kinase from Debaryomyces hansenii (strain ATCC 36239 / CBS 767 / BCRC 21394 / JCM 1990 / NBRC 0083 / IGC 2968) (Yeast).